Consider the following 125-residue polypeptide: Photoactive yellow protein (125 aa).

In terms of domain architecture, PAS spans 23 to 86; it reads LNQLAFGAIQ…GRFKEGVANG (64 aa). C69 carries the post-translational modification S-(4-hydroxycinnamyl)cysteine.

Belongs to the photoactive yellow protein family. The 4-hydroxycinnamic acid (p-coumaric acid) chromophore is covalently bound via a thioester linkage.

Functionally, photoactive blue light protein. Probably functions as a photoreceptor for a negative phototaxis response. The polypeptide is Photoactive yellow protein (pyp) (Halochromatium salexigens (Chromatium salexigens)).